We begin with the raw amino-acid sequence, 222 residues long: Cytidylate kinase 2 (222 aa).

Position 7-15 (7-15) interacts with ATP; that stretch reads GPSGAGKGT.

The protein belongs to the cytidylate kinase family. Type 1 subfamily.

It is found in the cytoplasm. It carries out the reaction CMP + ATP = CDP + ADP. The catalysed reaction is dCMP + ATP = dCDP + ADP. The polypeptide is Cytidylate kinase 2 (Haemophilus influenzae (strain ATCC 51907 / DSM 11121 / KW20 / Rd)).